Reading from the N-terminus, the 882-residue chain is Translation initiation factor IF-2 (882 aa).

Disordered stretches follow at residues 95–176 (PSVT…ASSL) and 229–289 (EHAR…SALQ). Positions 116 to 133 (TKNTFSQESLNKTSPQKS) are enriched in polar residues. Basic and acidic residues-rich tracts occupy residues 137 to 172 (KAIE…REAE) and 229 to 246 (EHAR…EGDR). Residues 247–262 (RSRHRGTKTTKQKKTN) show a composition bias toward basic residues. Positions 263-276 (KLSESKTDREEARA) are enriched in basic and acidic residues. In terms of domain architecture, tr-type G spans 382-551 (HRAPVVTIMG…LLQAEVLELK (170 aa)). A G1 region spans residues 391–398 (GHVDHGKT). 391 to 398 (GHVDHGKT) provides a ligand contact to GTP. The segment at 416 to 420 (GITQH) is G2. The G3 stretch occupies residues 437-440 (DTPG). Residues 437–441 (DTPGH) and 491–494 (NKID) contribute to the GTP site. Positions 491–494 (NKID) are G4. The G5 stretch occupies residues 527–529 (SAK).

Belongs to the TRAFAC class translation factor GTPase superfamily. Classic translation factor GTPase family. IF-2 subfamily.

The protein resides in the cytoplasm. Its function is as follows. One of the essential components for the initiation of protein synthesis. Protects formylmethionyl-tRNA from spontaneous hydrolysis and promotes its binding to the 30S ribosomal subunits. Also involved in the hydrolysis of GTP during the formation of the 70S ribosomal complex. The protein is Translation initiation factor IF-2 of Hamiltonella defensa subsp. Acyrthosiphon pisum (strain 5AT).